The sequence spans 420 residues: ATP phosphoribosyltransferase regulatory subunit (420 aa).

Belongs to the class-II aminoacyl-tRNA synthetase family. HisZ subfamily. In terms of assembly, heteromultimer composed of HisG and HisZ subunits.

Its subcellular location is the cytoplasm. The protein operates within amino-acid biosynthesis; L-histidine biosynthesis; L-histidine from 5-phospho-alpha-D-ribose 1-diphosphate: step 1/9. Its function is as follows. Required for the first step of histidine biosynthesis. May allow the feedback regulation of ATP phosphoribosyltransferase activity by histidine. The polypeptide is ATP phosphoribosyltransferase regulatory subunit (Bacillus thuringiensis subsp. konkukian (strain 97-27)).